A 417-amino-acid polypeptide reads, in one-letter code: Gamma-glutamyl phosphate reductase (417 aa).

The protein belongs to the gamma-glutamyl phosphate reductase family.

It localises to the cytoplasm. It carries out the reaction L-glutamate 5-semialdehyde + phosphate + NADP(+) = L-glutamyl 5-phosphate + NADPH + H(+). It functions in the pathway amino-acid biosynthesis; L-proline biosynthesis; L-glutamate 5-semialdehyde from L-glutamate: step 2/2. In terms of biological role, catalyzes the NADPH-dependent reduction of L-glutamate 5-phosphate into L-glutamate 5-semialdehyde and phosphate. The product spontaneously undergoes cyclization to form 1-pyrroline-5-carboxylate. This Polynucleobacter asymbioticus (strain DSM 18221 / CIP 109841 / QLW-P1DMWA-1) (Polynucleobacter necessarius subsp. asymbioticus) protein is Gamma-glutamyl phosphate reductase.